Here is an 84-residue protein sequence, read N- to C-terminus: MAVDRPQNLQDTFLNFVRKNKVPLTIFLVNGVKLQGVVTWFDNFCVLLRRDGHSQLVYKHAISTIMPGAPIQMFEPGDEAGHAG.

Residues 11 to 71 (DTFLNFVRKN…ISTIMPGAPI (61 aa)) form the Sm domain.

The protein belongs to the Hfq family. Homohexamer.

Its function is as follows. RNA chaperone that binds small regulatory RNA (sRNAs) and mRNAs to facilitate mRNA translational regulation in response to envelope stress, environmental stress and changes in metabolite concentrations. Also binds with high specificity to tRNAs. The sequence is that of RNA-binding protein Hfq from Beijerinckia indica subsp. indica (strain ATCC 9039 / DSM 1715 / NCIMB 8712).